We begin with the raw amino-acid sequence, 202 residues long: Putative 3-methyladenine DNA glycosylase (202 aa).

It belongs to the DNA glycosylase MPG family.

This is Putative 3-methyladenine DNA glycosylase from Staphylococcus haemolyticus (strain JCSC1435).